Consider the following 665-residue polypeptide: Long chain acyl-CoA synthetase 2 (665 aa).

Position 228–239 (228–239 (IMYTSGTTGEPK)) interacts with ATP. Residues 496-520 (DGWFHTGDIGEWQEDGSMKIIDRKK) are fatty acid-binding.

Belongs to the ATP-dependent AMP-binding enzyme family. Mg(2+) serves as cofactor. Expressed along the entire length of the stem, but expression was not entirely epidermal specific, with some expression found in internal cell layers as well. Was expressed in leave epidermal cells, flowers (sepals, petals, stamens, filaments and carpel), siliques and developing seeds. In roots, expression was detected in an internal cell layer, probably the endodermal layer.

Its subcellular location is the endoplasmic reticulum. The catalysed reaction is a long-chain fatty acid + ATP + CoA = a long-chain fatty acyl-CoA + AMP + diphosphate. It functions in the pathway lipid metabolism; fatty acid metabolism. Functionally, activation of long-chain fatty acids for both synthesis of cellular lipids, and degradation via beta-oxidation. Acts in the cutin pathway. Preferentially uses palmitate, palmitoleate, oleate and linoleate. Required for repression of lateral root formation through its role in cutin biosynthesis and subsequent aerial tissues permeability. The polypeptide is Long chain acyl-CoA synthetase 2 (LACS2) (Arabidopsis thaliana (Mouse-ear cress)).